The primary structure comprises 257 residues: S-methyl-5'-thioadenosine phosphorylase (257 aa).

Phosphate-binding positions include Ser-10 and 50–51; that span reads RH. Met-180 is a substrate binding site. Thr-181 contacts phosphate. Substrate is bound at residue 204 to 206; sequence DYD.

Belongs to the PNP/MTAP phosphorylase family. MTAP subfamily. As to quaternary structure, homohexamer. Dimer of a homotrimer.

It catalyses the reaction S-methyl-5'-thioadenosine + phosphate = 5-(methylsulfanyl)-alpha-D-ribose 1-phosphate + adenine. The protein operates within amino-acid biosynthesis; L-methionine biosynthesis via salvage pathway; S-methyl-5-thio-alpha-D-ribose 1-phosphate from S-methyl-5'-thioadenosine (phosphorylase route): step 1/1. Catalyzes the reversible phosphorylation of S-methyl-5'-thioadenosine (MTA) to adenine and 5-methylthioribose-1-phosphate. Involved in the breakdown of MTA, a major by-product of polyamine biosynthesis. Responsible for the first step in the methionine salvage pathway after MTA has been generated from S-adenosylmethionine. Has broad substrate specificity with 6-aminopurine nucleosides as preferred substrates. The polypeptide is S-methyl-5'-thioadenosine phosphorylase (mntP) (Pyrococcus abyssi (strain GE5 / Orsay)).